Consider the following 2958-residue polypeptide: Protein CSF1 (2958 aa).

Residues 1-17 are Cytoplasmic-facing; it reads MEAISQLRGVPLTHQKD. A helical; Signal-anchor for type II membrane protein membrane pass occupies residues 18–38; the sequence is FSWVFLVDWILTVVVCLTMIF. Residues 39–2958 lie on the Extracellular side of the membrane; that stretch reads YMGRIYAYLV…QYVKILDDTH (2920 aa). Asparagine 82, asparagine 117, asparagine 144, asparagine 271, asparagine 478, asparagine 530, asparagine 816, asparagine 821, asparagine 839, and asparagine 892 each carry an N-linked (GlcNAc...) asparagine glycan. The disordered stretch occupies residues 813-834; sequence GYQNSSLKNESEDKGPMKRSDL. Positions 821-834 are enriched in basic and acidic residues; sequence NESEDKGPMKRSDL. Positions 1175-1196 are disordered; it reads MEPSRASFSEDDNDEEADPSSF. Over residues 1183 to 1192 the composition is skewed to acidic residues; that stretch reads SEDDNDEEAD. N-linked (GlcNAc...) asparagine glycans are attached at residues asparagine 1309, asparagine 1368, asparagine 1453, asparagine 1785, asparagine 1921, asparagine 2130, asparagine 2146, asparagine 2280, asparagine 2337, asparagine 2520, asparagine 2578, asparagine 2719, and asparagine 2869.

This sequence belongs to the CSF1 family. In terms of assembly, interacts with MCD4; CSF1 channels phosphatidylethanolamine to MCD4 in the endoplasmic reticulum at contact sites to support GPI anchor biosynthesis.

The protein resides in the cell membrane. It is found in the endoplasmic reticulum membrane. The protein localises to the mitochondrion membrane. Tube-forming lipid transport protein which provides phosphatidylethanolamine for glycosylphosphatidylinositol (GPI) anchor synthesis in the endoplasmic reticulum. Required for the glucose and other nutrients uptake at low temperature. The chain is Protein CSF1 from Saccharomyces cerevisiae (strain ATCC 204508 / S288c) (Baker's yeast).